The chain runs to 1002 residues: Probable transport protein MmpL10 (1002 aa).

The next 12 membrane-spanning stretches (helical) occupy residues 1-21 (MVGC…SLAE), 177-197 (IAVM…TMLL), 199-219 (LVTI…VSLV), 228-248 (AIVL…VFLI), 268-288 (AMMS…ITFL), 306-326 (AIGI…ILVL), 358-378 (YLGA…LAHF), 806-826 (IVAV…RAIV), 835-855 (VVIS…VFLG), 862-882 (VPGL…MLLA), 901-921 (VRCT…SMSG), and 923-943 (LFSS…GILI).

This sequence belongs to the resistance-nodulation-cell division (RND) (TC 2.A.6) family. MmpL subfamily.

The protein resides in the cell membrane. This chain is Probable transport protein MmpL10 (mmpL10), found in Mycobacterium bovis (strain ATCC BAA-935 / AF2122/97).